The primary structure comprises 242 residues: Probable transcriptional regulatory protein lhv_0777 (242 aa).

The segment at 1 to 22 (MSGHSKWHNIQGRKNAQDAKRG) is disordered.

This sequence belongs to the TACO1 family.

The protein resides in the cytoplasm. The chain is Probable transcriptional regulatory protein lhv_0777 from Lactobacillus helveticus (strain DPC 4571).